Here is a 29-residue protein sequence, read N- to C-terminus: NAD-reducing hydrogenase HoxS subunit delta (29 aa).

A compositionally biased stretch (basic and acidic residues) spans 1–11 (MKHSEKNEIAS). The tract at residues 1–29 (MKHSEKNEIASHELPTTPLDPVLAAGRES) is disordered.

The protein belongs to the [NiFe]/[NiFeSe] hydrogenase small subunit family. Tetramer of an alpha and a gamma subunits (flavin-containing dimer), and a delta and a nickel-containing beta subunits (hydrogenase dimer). The cofactor is [4Fe-4S] cluster. [3Fe-4S] cluster is required as a cofactor. [2Fe-2S] cluster serves as cofactor. It depends on FMN as a cofactor. Requires Ni(2+) as cofactor.

The protein localises to the cytoplasm. It carries out the reaction H2 + NAD(+) = NADH + H(+). The polypeptide is NAD-reducing hydrogenase HoxS subunit delta (hoxY) (Rhodococcus opacus (Nocardia opaca)).